The following is a 186-amino-acid chain: Protein C (186 aa).

The span at 1 to 15 (MSKTDWNASGLSRPS) shows a compositional bias: polar residues. Positions 1–44 (MSKTDWNASGLSRPSPSAHWPSRKLWQHGQKYQTTQDRSEPPAG) are disordered.

It belongs to the morbillivirus protein C family. In terms of assembly, interacts with the phosphoprotein (via C-terminus); this interaction allows C to associate with the ribonucleocapsid.

It localises to the host nucleus. The protein localises to the host cytoplasmic vesicle. Its function is as follows. Ribonucleocapsid-associated protein that interacts with the phosphoprotein (P), thereby increasing replication accuracy and processivity of the polymerase complex. The protein is Protein C (P/V/C) of Homo sapiens (Human).